The following is a 230-amino-acid chain: uncharacterized protein (230 aa).

Positions 1–21 (MARYDARLRGIGKAHACSAFA) are cleaved as a signal peptide. The interval 47-190 (SASVQENFIA…TVQTSSSGDP (144 aa)) is disordered. Residues 141–150 (PQSQTSANSQ) show a composition bias toward polar residues. Basic and acidic residues predominate over residues 151 to 165 (KKPEIRCRERSKNAR). Residues 173–188 (AVATNEAETVQTSSSG) are compositionally biased toward polar residues.

To R.meliloti RA0936 and y4aO.

This is an uncharacterized protein from Sinorhizobium fredii (strain NBRC 101917 / NGR234).